Consider the following 260-residue polypeptide: Thymidylate synthase (260 aa).

Residue Arg-21 coordinates dUMP. His-51 is a (6R)-5,10-methylene-5,6,7,8-tetrahydrofolate binding site. 122 to 123 (RR) lines the dUMP pocket. Cys-142 serves as the catalytic Nucleophile. DUMP-binding positions include 162–165 (RSAD), Asn-173, and 203–205 (HLY). Asp-165 provides a ligand contact to (6R)-5,10-methylene-5,6,7,8-tetrahydrofolate. A (6R)-5,10-methylene-5,6,7,8-tetrahydrofolate-binding site is contributed by Ala-259.

The protein belongs to the thymidylate synthase family. Bacterial-type ThyA subfamily. Homodimer.

The protein localises to the cytoplasm. The enzyme catalyses dUMP + (6R)-5,10-methylene-5,6,7,8-tetrahydrofolate = 7,8-dihydrofolate + dTMP. It functions in the pathway pyrimidine metabolism; dTTP biosynthesis. Functionally, catalyzes the reductive methylation of 2'-deoxyuridine-5'-monophosphate (dUMP) to 2'-deoxythymidine-5'-monophosphate (dTMP) while utilizing 5,10-methylenetetrahydrofolate (mTHF) as the methyl donor and reductant in the reaction, yielding dihydrofolate (DHF) as a by-product. This enzymatic reaction provides an intracellular de novo source of dTMP, an essential precursor for DNA biosynthesis. The protein is Thymidylate synthase of Methylococcus capsulatus (strain ATCC 33009 / NCIMB 11132 / Bath).